Consider the following 1776-residue polypeptide: 6-methylsalicylic acid synthase (1776 aa).

Residues Met-1–Pro-18 are compositionally biased toward low complexity. The disordered stretch occupies residues Met-1–Tyr-26. Positions Ser-32 to Glu-457 constitute a Ketosynthase family 3 (KS3) domain. Residues Cys-204, His-339, and His-379 each act as for beta-ketoacyl synthase activity in the active site. The tract at residues Val-567 to Glu-880 is malonyl-CoA:ACP transacylase (MAT) domain. Residues His-925–Ser-1044 are N-terminal hotdog fold. Positions His-925–Glu-1196 are dehydratase (DH) domain. Residues His-925–Val-1201 form the PKS/mFAS DH domain. His-957 functions as the Proton acceptor; for dehydratase activity in the catalytic mechanism. Positions Thr-1058–Val-1201 are C-terminal hotdog fold. Catalysis depends on Asp-1113, which acts as the Proton donor; for dehydratase activity. The tract at residues Met-1205–Glu-1657 is product template (PT) domain. Positions Ala-1700–Ile-1774 constitute a Carrier domain. An O-(pantetheine 4'-phosphoryl)serine modification is found at Ser-1734.

The protein localises to the cytoplasm. The protein resides in the cytosol. The enzyme catalyses 3 malonyl-CoA + acetyl-CoA + NADPH + 3 H(+) = 6-methylsalicylate + 3 CO2 + NADP(+) + 4 CoA + H2O. Its pathway is mycotoxin biosynthesis; patulin biosynthesis. 6-methylsalicylic acid synthase; part of the gene cluster that mediates the biosynthesis of patulin, an acetate-derived tetraketide mycotoxin produced by several fungal species that shows antimicrobial properties against several bacteria. PatK catalyzes the first step of the pathway which is the synthesis of 6-methylsalicylic acid via condensation of 1 acetate and 3 malonate units. The pathway begins with the synthesis of 6-methylsalicylic acid by the polyketide synthase (PKS) patK via condensation of acetate and malonate units. The 6-methylsalicylic acid decarboxylase patG then catalyzes the decarboxylation of 6-methylsalicylic acid to yield m-cresol (also known as 3-methylphenol). These first reactions occur in the cytosol. The intermediate m-cresol is then transported into the endoplasmic reticulum where the cytochrome P450 monooxygenase patH converts it to m-hydroxybenzyl alcohol, which is further converted to gentisyl alcohol by the cytochrome P450 monooxygenase patI. The oxidoreductases patJ and patO further convert gentisyl alcohol to isoepoxydon in the vacuole. PatN catalyzes then the transformation of isoepoxydon into phyllostine. The cluster protein patF is responsible for the conversion from phyllostine to neopatulin whereas the alcohol dehydrogenase patD converts neopatulin to E-ascladiol. The steps between isoepoxydon and E-ascladiol occur in the cytosol, and E-ascladiol is probably secreted to the extracellular space by one of the cluster-specific transporters patC or patM. Finally, the secreted patulin synthase patE catalyzes the conversion of E-ascladiol to patulin. This is 6-methylsalicylic acid synthase from Penicillium expansum (Blue mold rot fungus).